Reading from the N-terminus, the 328-residue chain is Cytochrome c biogenesis protein CcsA (328 aa).

8 consecutive transmembrane segments (helical) span residues 13 to 33 (ISFS…LVNL), 46 to 66 (GIVI…IYSG), 73 to 93 (LYES…ISYF), 101 to 121 (LNAI…SGLL), 146 to 166 (MILG…LLVI), 234 to 254 (IISL…VWAN), 263 to 283 (WDPK…FLHI), and 295 to 315 (AIVA…VNLL).

Belongs to the CcmF/CycK/Ccl1/NrfE/CcsA family. In terms of assembly, may interact with Ccs1.

It is found in the plastid. Its subcellular location is the chloroplast thylakoid membrane. Its function is as follows. Required during biogenesis of c-type cytochromes (cytochrome c6 and cytochrome f) at the step of heme attachment. This chain is Cytochrome c biogenesis protein CcsA, found in Arabis hirsuta (Hairy rock-cress).